Reading from the N-terminus, the 354-residue chain is Bergaptol O-methyltransferase (354 aa).

Histidine 121 is a bergaptol binding site. Serine 174, glycine 198, aspartate 221, and lysine 255 together coordinate S-adenosyl-L-homocysteine. Histidine 259 provides a ligand contact to bergaptol. The Proton acceptor role is filled by histidine 259.

The protein belongs to the class I-like SAM-binding methyltransferase superfamily. Cation-independent O-methyltransferase family. COMT subfamily.

It catalyses the reaction a 5-hydroxyfurocoumarin + S-adenosyl-L-methionine = a 5-methoxyfurocoumarin + S-adenosyl-L-homocysteine + H(+). It carries out the reaction bergaptol + S-adenosyl-L-methionine = bergapten + S-adenosyl-L-homocysteine. With respect to regulation, inhibited by Cu(2+), Ni(2+) and Co(2+). This is Bergaptol O-methyltransferase from Ammi majus (Bishop's weed).